Here is a 250-residue protein sequence, read N- to C-terminus: HLA class II histocompatibility antigen, DO alpha chain (250 aa).

The first 25 residues, 1-25 (MALRAGLVLGFHTLMTLLSPQEAGA), serve as a signal peptide directing secretion. The segment at 26-110 (TKADHMGSYG…ERSNRSRAIN (85 aa)) is alpha-1. Topologically, residues 26–217 (TKADHMGSYG…VPIPPPDAME (192 aa)) are extracellular. 2 N-linked (GlcNAc...) asparagine glycosylation sites follow: N104 and N144. The segment at 111 to 204 (VPPRVTVLPK…GLDAPLLRHW (94 aa)) is alpha-2. The Ig-like C1-type domain occupies 113-205 (PRVTVLPKSR…LDAPLLRHWE (93 aa)). A disulfide bridge links C133 with C189. The interval 205 to 217 (ELQVPIPPPDAME) is connecting peptide. Residues 218–240 (TLVCALGLAIGLVGFLVGTVLII) form a helical membrane-spanning segment. Topologically, residues 241–250 (MGTYVSSVPR) are cytoplasmic.

It belongs to the MHC class II family. In terms of assembly, heterodimer of an alpha chain (DOA) and a beta chain (DOB). Forms a heterotetrameric complex with an HLA-DM molecule during intracellular transport in endosomal/lysosomal compartments in B-cells.

It localises to the endosome membrane. The protein resides in the lysosome membrane. Its function is as follows. Important modulator in the HLA class II restricted antigen presentation pathway by interaction with the HLA-DM molecule in B-cells. Modifies peptide exchange activity of HLA-DM. The protein is HLA class II histocompatibility antigen, DO alpha chain (HLA-DOA) of Homo sapiens (Human).